The sequence spans 129 residues: Succinate dehydrogenase assembly factor 3, mitochondrial (129 aa).

Residues 1-21 (MQVNHLLRQAVKQTTRAGRLG) constitute a mitochondrion transit peptide.

The protein belongs to the complex I LYR family. SDHAF3 subfamily. As to quaternary structure, interacts with the iron-sulfur protein subunit within the SDH catalytic dimer.

The protein localises to the mitochondrion matrix. Functionally, plays an essential role in the assembly of succinate dehydrogenase (SDH), an enzyme complex (also referred to as respiratory complex II) that is a component of both the tricarboxylic acid (TCA) cycle and the mitochondrial electron transport chain, and which couples the oxidation of succinate to fumarate with the reduction of ubiquinone (coenzyme Q) to ubiquinol. Promotes maturation of the iron-sulfur protein subunit of the SDH catalytic dimer, protecting it from the deleterious effects of oxidants. May act together with SDHAF1. The polypeptide is Succinate dehydrogenase assembly factor 3, mitochondrial (Kluyveromyces lactis (strain ATCC 8585 / CBS 2359 / DSM 70799 / NBRC 1267 / NRRL Y-1140 / WM37) (Yeast)).